The following is a 304-amino-acid chain: uncharacterized protein (304 aa).

Catalysis depends on charge relay system residues Thr-58 and Tyr-121. Tyr-147 (proton donor) is an active-site residue. Lys-175 (schiff-base intermediate with substrate) is an active-site residue.

The protein belongs to the DapA family. Homotetramer.

It is found in the cytoplasm. This is an uncharacterized protein from Halobacterium salinarum (strain ATCC 29341 / DSM 671 / R1).